The following is an 891-amino-acid chain: 26S proteasome non-ATPase regulatory subunit 2 homolog B (891 aa).

The tract at residues 1 to 43 (MAPVPDPNSVGGGAKRDEATTKIPSKDSKKKDDKKEEDLSEED) is disordered. The span at 14–37 (AKRDEATTKIPSKDSKKKDDKKEE) shows a compositional bias: basic and acidic residues. 7 PC repeats span residues 414 to 447 (SAVA…PVVA), 448 to 484 (GALL…SVRI), 485 to 519 (GAIM…PLDV), 522 to 556 (FAAL…AELG), 565 to 594 (LGLG…KIRK), 674 to 705 (LALG…EVAM), and 724 to 739 (AGML…KDAS).

Belongs to the proteasome subunit S2 family. Component of the 19S regulatory particle (RP/PA700) base subcomplex of the 26S proteasome. The 26S proteasome is composed of a core protease (CP), known as the 20S proteasome, capped at one or both ends by the 19S regulatory particle (RP/PA700). The RP/PA700 complex is composed of at least 17 different subunits in two subcomplexes, the base and the lid, which form the portions proximal and distal to the 20S proteolytic core, respectively. In terms of processing, ubiquitinated. As to expression, expressed in stems, leaves, buds, flowers, siliques and developing seeds.

In terms of biological role, acts as a regulatory subunit of the 26 proteasome which is involved in the ATP-dependent degradation of ubiquitinated proteins. The polypeptide is 26S proteasome non-ATPase regulatory subunit 2 homolog B (RPN1B) (Arabidopsis thaliana (Mouse-ear cress)).